A 505-amino-acid chain; its full sequence is ATP synthase subunit alpha, chloroplastic (505 aa).

Position 172–179 (172–179) interacts with ATP; the sequence is GDRQTGKT.

This sequence belongs to the ATPase alpha/beta chains family. In terms of assembly, F-type ATPases have 2 components, CF(1) - the catalytic core - and CF(0) - the membrane proton channel. CF(1) has five subunits: alpha(3), beta(3), gamma(1), delta(1), epsilon(1). CF(0) has four main subunits: a, b, b' and c.

The protein localises to the plastid. It localises to the chloroplast thylakoid membrane. The enzyme catalyses ATP + H2O + 4 H(+)(in) = ADP + phosphate + 5 H(+)(out). In terms of biological role, produces ATP from ADP in the presence of a proton gradient across the membrane. The alpha chain is a regulatory subunit. This Antithamnion sp. (Red alga) protein is ATP synthase subunit alpha, chloroplastic.